Reading from the N-terminus, the 539-residue chain is Phosphoenolpyruvate carboxykinase (ATP) (539 aa).

3 residues coordinate substrate: R61, Y195, and K201. ATP contacts are provided by residues K201, H220, and 238–246; that span reads GLSGTGKTT. 2 residues coordinate Mn(2+): K201 and H220. D259 is a Mn(2+) binding site. Positions 287, 325, and 450 each coordinate ATP. R325 provides a ligand contact to substrate.

Belongs to the phosphoenolpyruvate carboxykinase (ATP) family. Requires Mn(2+) as cofactor.

It is found in the cytoplasm. It catalyses the reaction oxaloacetate + ATP = phosphoenolpyruvate + ADP + CO2. It functions in the pathway carbohydrate biosynthesis; gluconeogenesis. In terms of biological role, involved in the gluconeogenesis. Catalyzes the conversion of oxaloacetate (OAA) to phosphoenolpyruvate (PEP) through direct phosphoryl transfer between the nucleoside triphosphate and OAA. The sequence is that of Phosphoenolpyruvate carboxykinase (ATP) from Methylorubrum extorquens (strain CM4 / NCIMB 13688) (Methylobacterium extorquens).